A 510-amino-acid polypeptide reads, in one-letter code: Outer spore wall protein 7 (510 aa).

Positions Met-1–Cys-23 are cleaved as a signal peptide. The disordered stretch occupies residues Phe-167–Val-195. Acidic residues predominate over residues Thr-169–Val-195. Tyr-354 is modified (phosphotyrosine).

Belongs to the OSW/SHE family.

Functionally, involved in spore wall assembly. The chain is Outer spore wall protein 7 from Saccharomyces cerevisiae (strain ATCC 204508 / S288c) (Baker's yeast).